Here is a 430-residue protein sequence, read N- to C-terminus: Enolase (430 aa).

Gln167 contacts (2R)-2-phosphoglycerate. The Proton donor role is filled by Glu209. Mg(2+) is bound by residues Asp246, Glu287, and Asp314. Positions 339, 368, 369, and 390 each coordinate (2R)-2-phosphoglycerate. Lys339 acts as the Proton acceptor in catalysis.

Belongs to the enolase family. The cofactor is Mg(2+).

The protein localises to the cytoplasm. Its subcellular location is the secreted. The protein resides in the cell surface. It carries out the reaction (2R)-2-phosphoglycerate = phosphoenolpyruvate + H2O. It participates in carbohydrate degradation; glycolysis; pyruvate from D-glyceraldehyde 3-phosphate: step 4/5. Its function is as follows. Catalyzes the reversible conversion of 2-phosphoglycerate (2-PG) into phosphoenolpyruvate (PEP). It is essential for the degradation of carbohydrates via glycolysis. The protein is Enolase of Prochlorococcus marinus subsp. pastoris (strain CCMP1986 / NIES-2087 / MED4).